A 120-amino-acid polypeptide reads, in one-letter code: Fumarate reductase subunit D (120 aa).

Transmembrane regions (helical) follow at residues 25-45 (FAML…LGVI), 55-75 (VAGF…ISMP), and 100-120 (IACY…IFMI).

This sequence belongs to the FrdD family. As to quaternary structure, part of an enzyme complex containing four subunits: a flavoprotein (FrdA), an iron-sulfur protein (FrdB), and two hydrophobic anchor proteins (FrdC and FrdD).

The protein resides in the cell inner membrane. Anchors the catalytic components of the fumarate reductase complex to the cell membrane, binds quinones. In Aliivibrio salmonicida (strain LFI1238) (Vibrio salmonicida (strain LFI1238)), this protein is Fumarate reductase subunit D.